The following is a 1210-amino-acid chain: Epidermal growth factor receptor (1210 aa).

Positions 1 to 24 (MRPSGTARTTLLVLLTALCAAGGA) are cleaved as a signal peptide. Topologically, residues 25–647 (LEEKKVCQGT…VWPSGPKIPS (623 aa)) are extracellular. The cysteines at positions 31 and 58 are disulfide-linked. The stretch at 75–300 (DLSFLKTIQE…CVKKCPRNYV (226 aa)) is one Approximate repeat. N-linked (GlcNAc...) asparagine glycans are attached at residues N128, N175, and N196. 13 disulfide bridges follow: C157-C187, C190-C199, C194-C207, C215-C223, C219-C231, C232-C240, C236-C248, C251-C260, C264-C291, C295-C307, C311-C326, C329-C333, and C337-C362. S229 carries the post-translational modification Phosphoserine. N-linked (GlcNAc...) asparagine glycosylation is found at N352, N413, and N444. An Approximate repeat occupies 390-600 (RELEILKTVK…CVKTCPAGIM (211 aa)). Intrachain disulfides connect C470-C499, C506-C515, C510-C523, C526-C535, C539-C555, C558-C571, C562-C579, C582-C591, C595-C617, C620-C628, and C624-C636. N528 carries N-linked (GlcNAc...) asparagine glycosylation. A glycan (N-linked (GlcNAc...) asparagine) is linked at N568. N-linked (GlcNAc...) asparagine glycans are attached at residues N603 and N623. A helical membrane pass occupies residues 648-670 (IATGIVGGLLFIVVVALGIGLFM). The Cytoplasmic portion of the chain corresponds to 671 to 1210 (RRRHIVRKRT…APPSSEFIGA (540 aa)). At T680 the chain carries Phosphothreonine; by PKC and PKD/PRKD1. The segment at 690–706 (LVEPLTPSGEAPNQAHL) is important for dimerization, phosphorylation and activation. Phosphothreonine; by PKD/PRKD1 is present on T695. S697 carries the phosphoserine modification. The Protein kinase domain maps to 714–981 (FKKIKVLGSG…KMARDPQRYL (268 aa)). K718 participates in a covalent cross-link: Glycyl lysine isopeptide (Lys-Gly) (interchain with G-Cter in ubiquitin). An ATP-binding site is contributed by 720-728 (LGSGAFGTV). K739 participates in a covalent cross-link: Glycyl lysine isopeptide (Lys-Gly) (interchain with G-Cter in ubiquitin). K747 lines the ATP pocket. At K747 the chain carries N6-(2-hydroxyisobutyryl)lysine. Glycyl lysine isopeptide (Lys-Gly) (interchain with G-Cter in ubiquitin) cross-links involve residues K756 and K759. 792 to 793 (TQ) is an ATP binding site. D839 serves as the catalytic Proton acceptor. D857 provides a ligand contact to ATP. K869 participates in a covalent cross-link: Glycyl lysine isopeptide (Lys-Gly) (interchain with G-Cter in ubiquitin). A Phosphotyrosine modification is found at Y871. Glycyl lysine isopeptide (Lys-Gly) (interchain with G-Cter in ubiquitin) cross-links involve residues K931, K962, and K972. A phosphoserine mark is found at S993 and S997. Phosphotyrosine; by autocatalysis is present on residues Y1000 and Y1018. 2 positions are modified to phosphoserine: S1028 and S1041. T1043 is modified (phosphothreonine). A Phosphoserine modification is found at S1044. C1051 is lipidated: S-palmitoyl cysteine. At Y1069 the chain carries Phosphotyrosine. 2 positions are modified to phosphoserine: S1070 and S1071. A phosphotyrosine; by autocatalysis mark is found at Y1092 and Y1110. The tract at residues 1113–1137 (QPLHPAPGRDLHYQNPHSNAVGNPE) is disordered. The span at 1127-1137 (NPHSNAVGNPE) shows a compositional bias: polar residues. Residue C1146 is the site of S-palmitoyl cysteine attachment. A Phosphoserine modification is found at S1166. Y1172 is subject to Phosphotyrosine; by autocatalysis. A Phosphotyrosine modification is found at Y1197. Position 1199 is an omega-N-methylarginine (R1199).

It belongs to the protein kinase superfamily. Tyr protein kinase family. EGF receptor subfamily. As to quaternary structure, binding of the ligand triggers homo- and/or heterodimerization of the receptor triggering its autophosphorylation. Heterodimer with ERBB2. Forms a complex with CCDC88A/GIV (via SH2-like region) and GNAI3 which leads to enhanced EGFR signaling and triggering of cell migration; binding of CCDC88A requires autophosphorylation of the EGFR C-terminal region, and ligand stimulation is required for recruitment of GNAI3 to the complex. Interacts with ERRFI1; inhibits dimerization of the kinase domain and autophosphorylation. Part of a complex with ERBB2 and either PIK3C2A or PIK3C2B. Interacts with GRB2; an adapter protein coupling the receptor to downstream signaling pathways. Interacts with GAB2; involved in signaling downstream of EGFR. Interacts with STAT3; mediates EGFR downstream signaling in cell proliferation. Interacts with RIPK1; involved in NF-kappa-B activation. Interacts (autophosphorylated) with CBL, CBLB and CBLC; involved in EGFR ubiquitination and regulation; interaction with CBL is reduced in the presence of tensin TNS4. Interacts with SOCS5; regulates EGFR degradation through ELOC- and ELOB-mediated ubiquitination and proteasomal degradation. Interacts with PRMT5; methylates EGFR and enhances interaction with PTPN6. Interacts (phosphorylated) with PTPN6; inhibits EGFR-dependent activation of MAPK/ERK. Interacts with COPG1; essential for regulation of EGF-dependent nuclear transport of EGFR by retrograde trafficking from the Golgi to the ER. Interacts with TNK2; this interaction is dependent on EGF stimulation and kinase activity of EGFR. Interacts with PCNA; positively regulates PCNA. Interacts with PELP1. Interacts with MUC1. Interacts with AP2M1. Interacts with FER. Interacts (via SH2 domains) with GRB2, NCK1 and NCK2. Interacts with EPS8; mediates EPS8 phosphorylation. Interacts with ATXN2. Interacts with GAREM1. Interacts (ubiquitinated) with ANKRD13A/B/D; the interaction is direct and may regulate EGFR internalization after EGF stimulation. Interacts with GPER1; the interaction occurs in an estrogen-dependent manner. Interacts (via C-terminal cytoplasmic kinase domain) with ZPR1 (via zinc fingers). Interacts with RNF115 and RNF126. Interacts with GPRC5A (via its transmembrane domain). Interacts with FAM83B; positively regulates EGFR inducing its autophosphorylation in absence of stimulation by EGF. Interacts with LAPTM4B; positively correlates with EGFR activation. Interacts with STX19. Interacts with CD44. Interacts with PGRMC1; the interaction requires PGRMC1 homodimerization. Interacts with PIKFYVE. Interacts with NEU3. Interacts with TRAF4. Interacts with the ant venom OMEGA-myrmeciitoxin(02)-Mg1a. Interacts with CD82; this interaction facilitates ligand-induced endocytosis of the receptor and its subsequent desensitization. Monoubiquitinated and polyubiquitinated upon EGF stimulation; which does not affect tyrosine kinase activity or signaling capacity but may play a role in lysosomal targeting. Polyubiquitin linkage is mainly through 'Lys-63', but linkage through 'Lys-48', 'Lys-11' and 'Lys-29' also occurs. Deubiquitinated by OTUD7B, preventing degradation. Ubiquitinated by RNF115 and RNF126. Ubiquitinated by ZNRF1 or CBL at different lysines in response to EGF stimulation; leading to recruitment of the ESCRT machinery and subsequent degradation in the lysosomes. Deubiquitinated by UCHL1 leading to the inhibition of its degradation. In terms of processing, phosphorylated on Tyr residues in response to EGF. Phosphorylation at Ser-697 is partial and occurs only if Thr-695 is phosphorylated. Phosphorylation at Thr-680 and Thr-695 by PRKD1 inhibits EGF-induced MAPK8/JNK1 activation. Dephosphorylation by PTPRJ prevents endocytosis and stabilizes the receptor at the plasma membrane. Autophosphorylation at Tyr-1199 is stimulated by methylation at Arg-1199 and enhances interaction with PTPN6. Autophosphorylation at Tyr-1092 and/or Tyr-1110 recruits STAT3. Dephosphorylated by PTPN1 and PTPN2. Post-translationally, palmitoylated on Cys residues by ZDHHC20. Palmitoylation inhibits internalization after ligand binding, and increases the persistence of tyrosine-phosphorylated EGFR at the cell membrane. Palmitoylation increases the amplitude and duration of EGFR signaling. Methylated. Methylation at Arg-1199 by PRMT5 stimulates phosphorylation at Tyr-1197.

The protein localises to the cell membrane. The protein resides in the endoplasmic reticulum membrane. It localises to the golgi apparatus membrane. It is found in the nucleus membrane. Its subcellular location is the endosome. The protein localises to the endosome membrane. The protein resides in the nucleus. The catalysed reaction is L-tyrosyl-[protein] + ATP = O-phospho-L-tyrosyl-[protein] + ADP + H(+). Its activity is regulated as follows. Endocytosis and inhibition of the activated EGFR by phosphatases like PTPRJ and PTPRK constitute immediate regulatory mechanisms. Upon EGF-binding phosphorylates EPS15 that regulates EGFR endocytosis and activity. Moreover, inducible feedback inhibitors including LRIG1, SOCS4, SOCS5 and ERRFI1 constitute alternative regulatory mechanisms for the EGFR signaling. Receptor tyrosine kinase binding ligands of the EGF family and activating several signaling cascades to convert extracellular cues into appropriate cellular responses. Known ligands include EGF, TGFA/TGF-alpha, AREG, epigen/EPGN, BTC/betacellulin, epiregulin/EREG and HBEGF/heparin-binding EGF. Ligand binding triggers receptor homo- and/or heterodimerization and autophosphorylation on key cytoplasmic residues. The phosphorylated receptor recruits adapter proteins like GRB2 which in turn activates complex downstream signaling cascades. Activates at least 4 major downstream signaling cascades including the RAS-RAF-MEK-ERK, PI3 kinase-AKT, PLCgamma-PKC and STATs modules. May also activate the NF-kappa-B signaling cascade. Also directly phosphorylates other proteins like RGS16, activating its GTPase activity and probably coupling the EGF receptor signaling to the G protein-coupled receptor signaling. Also phosphorylates MUC1 and increases its interaction with SRC and CTNNB1/beta-catenin. Positively regulates cell migration via interaction with CCDC88A/GIV which retains EGFR at the cell membrane following ligand stimulation, promoting EGFR signaling which triggers cell migration. Plays a role in enhancing learning and memory performance. Plays a role in mammalian pain signaling (long-lasting hypersensitivity). This chain is Epidermal growth factor receptor, found in Mus musculus (Mouse).